The following is a 950-amino-acid chain: Bifunctional glutamine synthetase adenylyltransferase/adenylyl-removing enzyme (950 aa).

An adenylyl removase region spans residues 1–440; it reads MLPLPSELQI…VFDHLIGDDA (440 aa). The segment at 449–950 is adenylyl transferase; the sequence is HGLYKSLWQD…KWLVAAPSDV (502 aa).

The protein belongs to the GlnE family. Requires Mg(2+) as cofactor.

The catalysed reaction is [glutamine synthetase]-O(4)-(5'-adenylyl)-L-tyrosine + phosphate = [glutamine synthetase]-L-tyrosine + ADP. It carries out the reaction [glutamine synthetase]-L-tyrosine + ATP = [glutamine synthetase]-O(4)-(5'-adenylyl)-L-tyrosine + diphosphate. Involved in the regulation of glutamine synthetase GlnA, a key enzyme in the process to assimilate ammonia. When cellular nitrogen levels are high, the C-terminal adenylyl transferase (AT) inactivates GlnA by covalent transfer of an adenylyl group from ATP to specific tyrosine residue of GlnA, thus reducing its activity. Conversely, when nitrogen levels are low, the N-terminal adenylyl removase (AR) activates GlnA by removing the adenylyl group by phosphorolysis, increasing its activity. The regulatory region of GlnE binds the signal transduction protein PII (GlnB) which indicates the nitrogen status of the cell. This chain is Bifunctional glutamine synthetase adenylyltransferase/adenylyl-removing enzyme, found in Yersinia enterocolitica serotype O:8 / biotype 1B (strain NCTC 13174 / 8081).